The primary structure comprises 207 residues: Suppressor of IKBKE 1 (207 aa).

Coiled coils occupy residues 70 to 102 and 164 to 192; these read HILLSQENTQIRDLQQENRELWVSLEEHQDALE and CKVQERLAQLELENKELRELLSISSESLQ.

This sequence belongs to the SIKE family. As to quaternary structure, interacts with IKBKE and TBK1 via its coiled coil region. Interaction with TBK1 is disrupted upon viral infection or TLR3 stimulation. Interacts with CDC42BPB. Interacts with SIKE1 which mediates association with the STRIPAK core complex composed of PP2A catalytic and scaffolding subunits, the striatins (PP2A regulatory subunits), the striatin-associated proteins MOB4, STRIP1 and STRIP2, PDCD10 and members of the STE20 kinases, such as STK24 and STK26.

It localises to the cytoplasm. Its function is as follows. Physiological suppressor of IKK-epsilon and TBK1 that plays an inhibitory role in virus- and TLR3-triggered IRF3. Inhibits TLR3-mediated activation of interferon-stimulated response elements (ISRE) and the IFN-beta promoter. May act by disrupting the interactions of IKBKE or TBK1 with TICAM1/TRIF, IRF3 and RIGI. Does not inhibit NF-kappa-B activation pathways. Associates with the striatin-interacting phosphatase and kinase (STRIPAK) core complex, forming the extended (SIKE1:SLMAP)STRIPAK complex. The (SIKE1:SLMAP)STRIPAK complex dephosphorylates STK3 leading to the inhibition of Hippo signaling and the control of cell growth. The chain is Suppressor of IKBKE 1 (Sike1) from Mus musculus (Mouse).